Here is a 742-residue protein sequence, read N- to C-terminus: Photosystem I P700 chlorophyll a apoprotein A2 (742 aa).

8 helical membrane-spanning segments follow: residues 46-69 (LFSTHFGHLAIIALWVAGNLFHVA), 135-158 (LFQASIFMSILACWVLFAGWLHLQ), 175-199 (LNHHLSVLFGFSSIAWTGHLVHVAI), 273-291 (IAHHHIAIGCVFVIAGHMY), 336-359 (LHFQLGLALASLGVATSLVAQHMG), 375-401 (SALYTHHQYIAMFLMVGAFAHGAIFFV), 423-445 (ALISHLSWVTMLLGFHTLGIYVH), and 525-543 (FLVHHAIALGLHTTALILI). [4Fe-4S] cluster-binding residues include Cys567 and Cys576. The next 2 membrane-spanning stretches (helical) occupy residues 583–604 (AMYLAMFWALNLIAWVTFYWHW) and 651–673 (LSPWAWMFLFGHLVWATGFMFLI). Positions 662, 670, and 678 each coordinate divinyl chlorophyll a. Trp679 is a phylloquinone binding site. Residues 715 to 735 (LVGLAHFTIGNILTFGAFVIA) traverse the membrane as a helical segment.

This sequence belongs to the PsaA/PsaB family. As to quaternary structure, the PsaA/B heterodimer binds the P700 divinyl chlorophyll special pair and subsequent electron acceptors. PSI consists of a core antenna complex that captures photons, and an electron transfer chain that converts photonic excitation into a charge separation. The cyanobacterial PSI reaction center is composed of one copy each of PsaA,B,C,D,E,F,I,J,K,L,M and X, and forms trimeric complexes. The cofactor is PSI electron transfer chain: 5 divinyl chlorophyll a, 1 divinyl chlorophyll a', 2 phylloquinones and 3 4Fe-4S clusters. PSI core antenna: 90 divinyl chlorophyll a, 22 carotenoids, 3 phospholipids and 1 galactolipid. P700 is a divinyl chlorophyll a/divinyl chlorophyll a' dimer, A0 is one or more divinyl chlorophyll a, A1 is one or both phylloquinones and FX is a shared 4Fe-4S iron-sulfur center..

The protein resides in the cellular thylakoid membrane. It carries out the reaction reduced [plastocyanin] + hnu + oxidized [2Fe-2S]-[ferredoxin] = oxidized [plastocyanin] + reduced [2Fe-2S]-[ferredoxin]. In terms of biological role, psaA and PsaB bind P700, the primary electron donor of photosystem I (PSI), as well as the electron acceptors A0, A1 and FX. PSI is a plastocyanin/cytochrome c6-ferredoxin oxidoreductase, converting photonic excitation into a charge separation, which transfers an electron from the donor P700 chlorophyll pair to the spectroscopically characterized acceptors A0, A1, FX, FA and FB in turn. Oxidized P700 is reduced on the lumenal side of the thylakoid membrane by plastocyanin or cytochrome c6. The protein is Photosystem I P700 chlorophyll a apoprotein A2 of Prochlorococcus marinus (strain MIT 9312).